A 614-amino-acid polypeptide reads, in one-letter code: Type VII secretion system protein EssD (614 aa).

Residues 417–445 (QNHVTHGPKDSMVRSEGKHSISSHEMNSS) form a disordered region. Residues 423-435 (GPKDSMVRSEGKH) are compositionally biased toward basic and acidic residues.

Belongs to the EssD family. Interacts (via C-terminal) with EssG; this interaction blocks EssD activity. Interacts with EssE.

The protein resides in the secreted. It is found in the cell membrane. Its function is as follows. Component of the type VII secretion system (Ess). Plays a role in Ess secretion during infection. Required for the efficient secretion of EsxA. Required for abscess formation and staphylococcal persistence in host tissues. Possesses a toxic DNase activity that is modulated by EsaG by forming a nuclease toxin-antitoxin pair. This nuclease toxin targets competitor bacteria. This chain is Type VII secretion system protein EssD, found in Staphylococcus aureus (strain USA300).